A 260-amino-acid polypeptide reads, in one-letter code: Snake venom serine protease homolog KN4 (260 aa).

A signal peptide spans 1 to 18 (MVLIRVLANLLILQLSYA). Residues 19–24 (QKSSEL) constitute a propeptide that is removed on maturation. The Peptidase S1 domain maps to 25 to 251 (IIGGDECNIN…HLDWIQNIIA (227 aa)). Disulfide bonds link C31–C165, C52–C68, C100–C258, C144–C212, C176–C191, and C202–C227. N-linked (GlcNAc...) asparagine glycans are attached at residues N83, N123, N124, N156, and N172. Residue N253 is glycosylated (N-linked (GlcNAc...) asparagine).

This sequence belongs to the peptidase S1 family. Snake venom subfamily. In terms of tissue distribution, expressed by the venom gland.

It is found in the secreted. Functionally, snake venom serine protease homolog that may act in the hemostasis system of the prey. The chain is Snake venom serine protease homolog KN4 from Trimeresurus stejnegeri (Chinese green tree viper).